We begin with the raw amino-acid sequence, 292 residues long: MEMO1 family protein PF1638 (292 aa).

This sequence belongs to the MEMO1 family.

The protein is MEMO1 family protein PF1638 of Pyrococcus furiosus (strain ATCC 43587 / DSM 3638 / JCM 8422 / Vc1).